The sequence spans 64 residues: Large ribosomal subunit protein bL35 (64 aa).

Belongs to the bacterial ribosomal protein bL35 family.

In Coxiella burnetii (strain RSA 331 / Henzerling II), this protein is Large ribosomal subunit protein bL35.